The following is a 151-amino-acid chain: Ribosome maturation factor RimP (151 aa).

It belongs to the RimP family.

The protein resides in the cytoplasm. In terms of biological role, required for maturation of 30S ribosomal subunits. This chain is Ribosome maturation factor RimP, found in Aliivibrio fischeri (strain MJ11) (Vibrio fischeri).